The sequence spans 126 residues: Holo-[acyl-carrier-protein] synthase (126 aa).

Asp-9 and Glu-57 together coordinate Mg(2+).

It belongs to the P-Pant transferase superfamily. AcpS family. Requires Mg(2+) as cofactor.

The protein localises to the cytoplasm. It catalyses the reaction apo-[ACP] + CoA = holo-[ACP] + adenosine 3',5'-bisphosphate + H(+). In terms of biological role, transfers the 4'-phosphopantetheine moiety from coenzyme A to a Ser of acyl-carrier-protein. This chain is Holo-[acyl-carrier-protein] synthase, found in Idiomarina loihiensis (strain ATCC BAA-735 / DSM 15497 / L2-TR).